A 114-amino-acid polypeptide reads, in one-letter code: ATP synthase subunit c (114 aa).

A run of 2 helical transmembrane segments spans residues Ala-31–Gly-51 and Ile-88–Phe-108.

This sequence belongs to the ATPase C chain family. F-type ATPases have 2 components, F(1) - the catalytic core - and F(0) - the membrane proton channel. F(1) has five subunits: alpha(3), beta(3), gamma(1), delta(1), epsilon(1). F(0) has three main subunits: a(1), b(2) and c(10-14). The alpha and beta chains form an alternating ring which encloses part of the gamma chain. F(1) is attached to F(0) by a central stalk formed by the gamma and epsilon chains, while a peripheral stalk is formed by the delta and b chains.

The protein resides in the cell inner membrane. F(1)F(0) ATP synthase produces ATP from ADP in the presence of a proton or sodium gradient. F-type ATPases consist of two structural domains, F(1) containing the extramembraneous catalytic core and F(0) containing the membrane proton channel, linked together by a central stalk and a peripheral stalk. During catalysis, ATP synthesis in the catalytic domain of F(1) is coupled via a rotary mechanism of the central stalk subunits to proton translocation. In terms of biological role, key component of the F(0) channel; it plays a direct role in translocation across the membrane. A homomeric c-ring of between 10-14 subunits forms the central stalk rotor element with the F(1) delta and epsilon subunits. This Sulfurihydrogenibium sp. (strain YO3AOP1) protein is ATP synthase subunit c.